We begin with the raw amino-acid sequence, 123 residues long: Amoebiasin-2 (123 aa).

The first 16 residues, 1–16, serve as a signal peptide directing secretion; sequence MKQFIFFALLCTSTYA. Residues 45-50 carry the BC loop motif; the sequence is NPSTGY. The short motif at 71 to 81 is the DE loop element; the sequence is EPHPSGMVGFP. The FG loop signature appears at 105–114; the sequence is PWEKGKEPLR.

It belongs to the protease inhibitor I42 family. As to quaternary structure, monomer. May form homodimer. Interacts with cysteine protease CP2. Interacts with cysteine protease CP5.

The protein resides in the cytoplasmic vesicle. Its subcellular location is the lysosome. The protein localises to the phagosome. Functionally, cysteine protease inhibitor. Inhibits cysteine proteases CP1, CP2 and to a lesser extent CP5. This is Amoebiasin-2 from Entamoeba histolytica (strain ATCC 30459 / HM-1:IMSS / ABRM).